Consider the following 91-residue polypeptide: YcgL domain-containing protein ETA_15380 (91 aa).

Residues 1 to 85 (MFCVIYRSPQ…PLESLLKIHL (85 aa)) enclose the YcgL domain.

The sequence is that of YcgL domain-containing protein ETA_15380 from Erwinia tasmaniensis (strain DSM 17950 / CFBP 7177 / CIP 109463 / NCPPB 4357 / Et1/99).